A 431-amino-acid polypeptide reads, in one-letter code: Putative malic acid transport protein (431 aa).

10 consecutive transmembrane segments (helical) span residues 30-50, 62-82, 101-121, 136-156, 167-187, 201-221, 239-259, 284-304, 318-338, and 346-366; these read FTWAWFASAMGTGGIGMVTSL, GKIIFIFQLSILTLYICCITF, VLFMPTALLAIATSISNLYPY, ILYWIFVAVACIFVISLFYSL, IIPALVLPIFPCMICGVIASA, VVAGIAFQGLGFWIYIIVYAV, GMFILVSPPSFTGLTLLDLAF, FMALFMIGLGIFNFCLAFVSV, VSWFAMIFANVGLVMDVQELG, and VCIVGQVCGVTITIVWIILIL. The segment covering 402 to 424 has biased composition (basic and acidic residues); the sequence is EEEKDEAERSKRKAEESDGKTTR. Residues 402–431 form a disordered region; that stretch reads EEEKDEAERSKRKAEESDGKTTRELTSGGL.

This sequence belongs to the tellurite-resistance/dicarboxylate transporter (TDT) family.

It is found in the membrane. This is Putative malic acid transport protein from Schizosaccharomyces pombe (strain 972 / ATCC 24843) (Fission yeast).